The primary structure comprises 213 residues: Kynurenine formamidase (213 aa).

W18 provides a ligand contact to substrate. Zn(2+) is bound by residues H48, H52, and D54. The active-site Proton donor/acceptor is the H58. The Zn(2+) site is built by H160 and E172.

The protein belongs to the Cyclase 1 superfamily. KynB family. As to quaternary structure, homodimer. Requires Zn(2+) as cofactor.

The enzyme catalyses N-formyl-L-kynurenine + H2O = L-kynurenine + formate + H(+). It participates in amino-acid degradation; L-tryptophan degradation via kynurenine pathway; L-kynurenine from L-tryptophan: step 2/2. Catalyzes the hydrolysis of N-formyl-L-kynurenine to L-kynurenine, the second step in the kynurenine pathway of tryptophan degradation. The protein is Kynurenine formamidase of Burkholderia ambifaria (strain ATCC BAA-244 / DSM 16087 / CCUG 44356 / LMG 19182 / AMMD) (Burkholderia cepacia (strain AMMD)).